The chain runs to 189 residues: Peptidyl-tRNA hydrolase (189 aa).

Tyr-15 provides a ligand contact to tRNA. His-20 (proton acceptor) is an active-site residue. TRNA-binding residues include Phe-66, Asn-68, and Asn-114.

The protein belongs to the PTH family. Monomer.

The protein resides in the cytoplasm. The enzyme catalyses an N-acyl-L-alpha-aminoacyl-tRNA + H2O = an N-acyl-L-amino acid + a tRNA + H(+). In terms of biological role, hydrolyzes ribosome-free peptidyl-tRNAs (with 1 or more amino acids incorporated), which drop off the ribosome during protein synthesis, or as a result of ribosome stalling. Functionally, catalyzes the release of premature peptidyl moieties from peptidyl-tRNA molecules trapped in stalled 50S ribosomal subunits, and thus maintains levels of free tRNAs and 50S ribosomes. This Streptococcus pneumoniae (strain CGSP14) protein is Peptidyl-tRNA hydrolase.